A 712-amino-acid chain; its full sequence is Cyclolysin secretion/processing ATP-binding protein CyaB (712 aa).

The 122-residue stretch at 7-128 (QCASVPDSGL…ALWAGELLLC (122 aa)) folds into the Peptidase C39 domain. One can recognise an ABC transmembrane type-1 domain in the interval 157–439 (IGEVLLISLV…LAQLWNDFQQ (283 aa)). The next 6 helical transmembrane spans lie at 160–180 (VLLISLVLQFISLLTPLFFQV), 194–214 (LNVIAVGFLAAILFEALLTGI), 272–292 (AVTVLLDVVFSVVFIAVMFFY), 298–318 (LVVLAALPCYFLLSLVLTPVL), 367–387 (VAAGLSVANVAMLANTGVTLI), and 390–410 (LVALGVLWVGATEVVAQRMTV). Residues 471-706 (IELDRVSFRY…GGLYARLQAL (236 aa)) form the ABC transporter domain. 505 to 512 (GRSGSGKS) lines the ATP pocket.

This sequence belongs to the ABC transporter superfamily. Cyclolysin exporter (TC 3.A.1.109.2) family.

It is found in the cell membrane. In terms of biological role, involved in the export of calmodulin-sensitive adenylate cyclase-hemolysin (cyclolysin). The protein is Cyclolysin secretion/processing ATP-binding protein CyaB (cyaB) of Bordetella pertussis (strain ATCC 9797 / DSM 5571 / CCUG 30873 / LMG 14455 / NCTC 10739 / 18323).